The following is a 145-amino-acid chain: Acidic phospholipase A2 (145 aa).

The signal sequence occupies residues 1–19 (MNPAHLLILSAVCVSLLGA). Positions 20–27 (ANVPPQHL) are excised as a propeptide. Disulfide bonds link C38–C97, C52–C144, C54–C70, C69–C125, C76–C118, C86–C111, and C104–C116. Ca(2+) contacts are provided by Y53, G55, and G57. Residue H73 is part of the active site. D74 lines the Ca(2+) pocket. D119 is an active-site residue.

The protein belongs to the phospholipase A2 family. Group I subfamily. D49 sub-subfamily. Ca(2+) is required as a cofactor. Expressed by the venom gland.

The protein resides in the secreted. It catalyses the reaction a 1,2-diacyl-sn-glycero-3-phosphocholine + H2O = a 1-acyl-sn-glycero-3-phosphocholine + a fatty acid + H(+). Its function is as follows. PLA2 catalyzes the calcium-dependent hydrolysis of the 2-acyl groups in 3-sn-phosphoglycerides. This is Acidic phospholipase A2 from Bungarus multicinctus (Many-banded krait).